An 887-amino-acid chain; its full sequence is Lon protease homolog 2, peroxisomal (887 aa).

One can recognise a Lon N-terminal domain in the interval 11–256 (LGILAFRNKV…KATELVDRHL (246 aa)). A disordered region spans residues 72–101 (YPGGGTDSGERNVKSQPGLSDSRKADGKSQ). 409–416 (GPPGVGKT) contacts ATP. The Lon proteolytic domain occupies 693–878 (VSNPGVSVGL…EVLEQAFEGG (186 aa)). Active-site residues include S784 and K827. The Microbody targeting signal signature appears at 885–887 (ARL).

This sequence belongs to the peptidase S16 family.

The protein localises to the peroxisome matrix. The catalysed reaction is Hydrolysis of proteins in presence of ATP.. Its function is as follows. ATP-dependent serine protease that mediates the selective degradation of misfolded and unassembled polypeptides in the peroxisomal matrix. Necessary for type 2 peroxisome targeting signal (PTS2)-containing protein processing and facilitates peroxisome matrix protein import. This chain is Lon protease homolog 2, peroxisomal, found in Spinacia oleracea (Spinach).